The following is a 182-amino-acid chain: Large ribosomal subunit protein uL5 (182 aa).

This sequence belongs to the universal ribosomal protein uL5 family. Part of the 50S ribosomal subunit; part of the 5S rRNA/L5/L18/L25 subcomplex. Contacts the 5S rRNA and the P site tRNA. Forms a bridge to the 30S subunit in the 70S ribosome.

Its function is as follows. This is one of the proteins that bind and probably mediate the attachment of the 5S RNA into the large ribosomal subunit, where it forms part of the central protuberance. In the 70S ribosome it contacts protein S13 of the 30S subunit (bridge B1b), connecting the 2 subunits; this bridge is implicated in subunit movement. Contacts the P site tRNA; the 5S rRNA and some of its associated proteins might help stabilize positioning of ribosome-bound tRNAs. This is Large ribosomal subunit protein uL5 from Borreliella afzelii (strain PKo) (Borrelia afzelii).